A 233-amino-acid chain; its full sequence is 27 kDa hemolymph glycoprotein (233 aa).

The N-terminal stretch at 1–17 (MIWKTLIVAFMATAVLA) is a signal peptide. 2 N-linked (GlcNAc...) asparagine glycosylation sites follow: Asn125 and Asn156.

Belongs to the UPF0408 family. In terms of processing, N-glycosylated. In terms of tissue distribution, hemolymph.

It localises to the secreted. This Manduca sexta (Tobacco hawkmoth) protein is 27 kDa hemolymph glycoprotein.